Here is a 74-residue protein sequence, read N- to C-terminus: MKVKFLLAVFLIVLVVTDHCHALFGLIPSLIGGLVSAFKGRRKRQMEARFEPQNRNYRKRELDLEKLFANMPDY.

An N-terminal signal peptide occupies residues 1 to 22 (MKVKFLLAVFLIVLVVTDHCHA). The residue at position 39 (lysine 39) is a Lysine amide. The propeptide occupies 45–74 (QMEARFEPQNRNYRKRELDLEKLFANMPDY).

The protein belongs to the non-disulfide-bridged peptide (NDBP) superfamily. Short antimicrobial peptide (group 4) family. Expressed by the venom gland.

The protein localises to the secreted. The protein resides in the target cell membrane. In terms of biological role, mucroporin: cationic host defense peptide that have antibacterial activity by breaking membranes. Is more effective on Gram-positive than on Gram-negative bacteria. Minimum inhibitory concentrations (MIC) are the following: MIC=&gt;100 ug/ml against E.coli AB94012, MIC=&gt;100 ug/ml against P.aeruginosa AB93066, MIC=25 ug/ml against B.thuringiensis AB92037, MIC=50 ug/ml against B.subtilis AB91021, MIC=25 ug/ml against S.aureus AB94004, and MIC=25 ug/ml against the methicillin-resistant coagulase-negative Staphylococcus. Its synthetic analog mucroporin-M1 is more effective. Does not show antiviral activity against any of measles, SARS-CoV, influenza H5N1, hepatitis B and HIV-1 viruses. Functionally, mutant mucroporin-M1: can inhibit Gram-positive bacteria at low concentrations and antibiotic-resistant pathogens. Minimum inhibitory concentrations (MIC) are the following: MIC=12.5 ug/ml against E.coli AB94012, MIC=100 ug/ml against P.aeruginosa AB93066, MIC=25 ug/ml against B.thuringiensis AB92037, MIC=25 ug/ml against B.subtilis AB91021, MIC=5 ug/ml against S.aureus AB94004, and MIC=5 ug/ml against the methicillin-resistant coagulase-negative Staphylococcus. Also shows antiviral activities against measles (EC(50) of 7.15 ug/ml), SARS-CoV (EC(50) of 14.46 ug/ml), influenza H5N1 viruses (EC(50) of 2.10 mug/ml), HIV-1, and hepatitis B virus. The protein is Mucroporin of Lychas mucronatus (Chinese swimming scorpion).